The chain runs to 559 residues: Pentatricopeptide repeat-containing protein At4g38010 (559 aa).

PPR repeat units lie at residues 70-104 (SSFS…GFSP), 105-139 (DMFT…GFYD), 140-170 (DIYV…MPVR), 171-201 (DVVS…MDVE), 203-233 (NLAT…ILKR), 238-268 (SLET…LEKK), 269-304 (DKVS…GIKP), 305-339 (DGHI…GIKW), 340-370 (DTHI…IRSK), 371-405 (NVFT…GFKP), 406-440 (NLVT…EYNL), and 443-473 (KLEH…MPVK). The tract at residues 478–554 (ICGAILSACK…VPGSSYIEKF (77 aa)) is type E motif.

The protein belongs to the PPR family. PCMP-E subfamily.

This chain is Pentatricopeptide repeat-containing protein At4g38010 (PCMP-E45), found in Arabidopsis thaliana (Mouse-ear cress).